The following is a 196-amino-acid chain: Dephospho-CoA kinase (196 aa).

Residues 5–196 (IIGLTGGIAT…QVDIALNFEL (192 aa)) form the DPCK domain. Residue 13–18 (ATGKTT) participates in ATP binding.

The protein belongs to the CoaE family.

Its subcellular location is the cytoplasm. The catalysed reaction is 3'-dephospho-CoA + ATP = ADP + CoA + H(+). It functions in the pathway cofactor biosynthesis; coenzyme A biosynthesis; CoA from (R)-pantothenate: step 5/5. Functionally, catalyzes the phosphorylation of the 3'-hydroxyl group of dephosphocoenzyme A to form coenzyme A. The polypeptide is Dephospho-CoA kinase (Nostoc sp. (strain PCC 7120 / SAG 25.82 / UTEX 2576)).